Consider the following 215-residue polypeptide: MKILVTGFDPFGGEAINPALEAIKKLPATIHGAEIKCIEVPTVFQKSADVLQQHIESFQPDAVLCIGQAGGRTGLTPERVAINQDDARIPDNEGNQPIDTPIRVDGKAAYFSTLPIKAMVAAIHQAGLPASVSNTAGTFVCNHLMYQALYLVDKYCPNAKAGFMHIPFMMEQVVDKPNTAAMNLDDITRGIEAAIFAIVDFKDRSDLKRVGGATH.

Catalysis depends on residues glutamate 78, cysteine 141, and histidine 165.

The protein belongs to the peptidase C15 family. Homotetramer.

The protein localises to the cytoplasm. The enzyme catalyses Release of an N-terminal pyroglutamyl group from a polypeptide, the second amino acid generally not being Pro.. Its function is as follows. Removes 5-oxoproline from various penultimate amino acid residues except L-proline. The chain is Pyrrolidone-carboxylate peptidase from Streptococcus pyogenes serotype M3 (strain SSI-1).